We begin with the raw amino-acid sequence, 212 residues long: Orotate phosphoribosyltransferase (212 aa).

5-phospho-alpha-D-ribose 1-diphosphate-binding positions include Arg97, Lys101, His103, and 123 to 131; that span reads EDLISTGGS. Residue Ser127 coordinates orotate.

This sequence belongs to the purine/pyrimidine phosphoribosyltransferase family. PyrE subfamily. Homodimer. Mg(2+) serves as cofactor.

The catalysed reaction is orotidine 5'-phosphate + diphosphate = orotate + 5-phospho-alpha-D-ribose 1-diphosphate. It functions in the pathway pyrimidine metabolism; UMP biosynthesis via de novo pathway; UMP from orotate: step 1/2. Catalyzes the transfer of a ribosyl phosphate group from 5-phosphoribose 1-diphosphate to orotate, leading to the formation of orotidine monophosphate (OMP). This is Orotate phosphoribosyltransferase from Bacteroides fragilis (strain ATCC 25285 / DSM 2151 / CCUG 4856 / JCM 11019 / LMG 10263 / NCTC 9343 / Onslow / VPI 2553 / EN-2).